Consider the following 422-residue polypeptide: L-2-hydroxyglutarate dehydrogenase (422 aa).

It belongs to the L2HGDH family. It depends on FAD as a cofactor.

Its subcellular location is the cell inner membrane. It catalyses the reaction (S)-2-hydroxyglutarate + a quinone = a quinol + 2-oxoglutarate. It participates in amino-acid degradation. Catalyzes the dehydrogenation of L-2-hydroxyglutarate (L2HG) to alpha-ketoglutarate and couples to the respiratory chain by feeding electrons from the reaction into the membrane quinone pool. Functions in a L-lysine degradation pathway that proceeds via cadaverine, glutarate and L-2-hydroxyglutarate. Also displays some oxidase activity in vitro on L-2-hydroxyglutarate with O2 as the electron acceptor, but this activity is most likely not physiological. This Salmonella houtenae protein is L-2-hydroxyglutarate dehydrogenase.